A 468-amino-acid polypeptide reads, in one-letter code: 55 kDa erythrocyte membrane protein (468 aa).

The region spanning 73-154 (LVQFEKVTEE…MVSIKVIPNQ (82 aa)) is the PDZ domain. Residues 160-230 (ALQMFMRAQF…PSPELQEWRV (71 aa)) enclose the SH3 domain. The Guanylate kinase-like domain occupies 284-453 (RKTLVLIGAS…SLKLLEEAFE (170 aa)).

It belongs to the MAGUK family.

The protein localises to the membrane. The protein resides in the cell projection. Its subcellular location is the stereocilium. In terms of biological role, may play a role in the regulation of neutrophil polarization. This chain is 55 kDa erythrocyte membrane protein (MPP1), found in Gallus gallus (Chicken).